Consider the following 412-residue polypeptide: Gamma-glutamyl phosphate reductase (412 aa).

The protein belongs to the gamma-glutamyl phosphate reductase family.

Its subcellular location is the cytoplasm. The enzyme catalyses L-glutamate 5-semialdehyde + phosphate + NADP(+) = L-glutamyl 5-phosphate + NADPH + H(+). The protein operates within amino-acid biosynthesis; L-proline biosynthesis; L-glutamate 5-semialdehyde from L-glutamate: step 2/2. In terms of biological role, catalyzes the NADPH-dependent reduction of L-glutamate 5-phosphate into L-glutamate 5-semialdehyde and phosphate. The product spontaneously undergoes cyclization to form 1-pyrroline-5-carboxylate. The chain is Gamma-glutamyl phosphate reductase from Bartonella quintana (strain Toulouse) (Rochalimaea quintana).